The following is a 524-amino-acid chain: MSDNGELEDKPPAPPVRMSSTIFSTGGKDPLSANHSLKPLPSVPEEKKPRNKIISIFSGTEKGSKKKEKERPEISPPSDFEHTIHVGFDAVTGEFTGMPEQWARLLQTSNITKLEQKKNPQAVLDVLKFYDSNTVKQKYLSFTPPEKDGFPSGAPALNTKVSETSAVVTEEDDDDEEAAPPVIAPRPDHTKSIYTRSVIDPIPAPVGDSHVDSGAKSSDKQKKKTKMTDEEIMEKLRTIVSIGDPKKKYTRYEKIGQGASGTVFTATDVALGQEVAIKQINLQKQPKKELIINEILVMKELKNPNIVNFLDSYLVGDELFVVMEYLAGGSLTDVVTETCMDEAQIAAVCRECLQALEFLHANQVIHRDIKSDNVLLGMEGSVKLTDFGFCAQITPEQSKRSTMVGTPYWMAPEVVTRKAYGPKVDIWSLGIMAIEMVEGEPPYLNENPLRALYLIATNGTPELQNPEKLSPIFRDFLNRCLEMDVEKRGSAKELLQHPFLKLAKPLSSLTPLIMAAKEAMKSNR.

The interval 1-81 (MSDNGELEDK…PEISPPSDFE (81 aa)) is disordered. Ser2 carries the N-acetylserine modification. A phosphoserine mark is found at Ser2, Ser20, Ser55, and Ser58. Position 60 is a phosphothreonine (Thr60). An N6-acetyllysine modification is found at Lys62. Ser64 carries the post-translational modification Phosphoserine. Over residues 67–81 (KEKERPEISPPSDFE) the composition is skewed to basic and acidic residues. A GTPase-binding region spans residues 69–112 (KERPEISPPSDFEHTIHVGFDAVTGEFTGMPEQWARLLQTSNIT). The segment at 69-137 (KERPEISPPS…KFYDSNTVKQ (69 aa)) is autoregulatory region. The 14-residue stretch at 74–87 (ISPPSDFEHTIHVG) folds into the CRIB domain. Positions 88–248 (FDAVTGEFTG…IVSIGDPKKK (161 aa)) are linker. Lys128 is modified (N6-acetyllysine). Residue Thr134 is modified to Phosphothreonine. At Tyr139 the chain carries Phosphotyrosine. Ser141 carries the phosphoserine modification. Thr143 carries the post-translational modification Phosphothreonine. Ser152 is modified (phosphoserine). Thr159 and Thr169 each carry phosphothreonine. Residues 169-178 (TEEDDDDEEA) show a composition bias toward acidic residues. The disordered stretch occupies residues 169-188 (TEEDDDDEEAAPPVIAPRPD). At Ser197 the chain carries Phosphoserine. Residues 204-228 (APVGDSHVDSGAKSSDKQKKKTKMT) are disordered. Basic and acidic residues predominate over residues 209–228 (SHVDSGAKSSDKQKKKTKMT). The Nuclear localization signal signature appears at 245-251 (PKKKYTR). The Protein kinase domain maps to 249–500 (YTRYEKIGQG…AKELLQHPFL (252 aa)). ATP is bound by residues 255–263 (IGQGASGTV) and Lys278. The active-site Proton acceptor is Asp368. Phosphothreonine; by autocatalysis is present on Thr402.

As to quaternary structure, interacts tightly with GTP-bound but not GDP-bound CDC42/p21 and RAC1. Interacts with SH3MD4. Interacts with SCRIB. Interacts with ARHGEF7 and GIT1. PAK-2p34 interacts with ARHGAP10. Interacts with RAC1. Full-length PAK2 is autophosphorylated when activated by CDC42/p21. Following cleavage, both peptides, PAK-2p27 and PAK-2p34, become highly autophosphorylated. Autophosphorylation of PAK-2p27 can occur in the absence of any effectors and is dependent on phosphorylation of Thr-402, because PAK-2p27 is acting as an exogenous substrate. Post-translationally, during apoptosis proteolytically cleaved by caspase-3 or caspase-3-like proteases to yield active PAK-2p34. In terms of processing, ubiquitinated, leading to its proteasomal degradation.

The protein localises to the cytoplasm. It is found in the nucleus. Its subcellular location is the perinuclear region. It localises to the membrane. The enzyme catalyses L-seryl-[protein] + ATP = O-phospho-L-seryl-[protein] + ADP + H(+). It catalyses the reaction L-threonyl-[protein] + ATP = O-phospho-L-threonyl-[protein] + ADP + H(+). With respect to regulation, activated by binding small G proteins. Binding of GTP-bound CDC42 or RAC1 to the autoregulatory region releases monomers from the autoinhibited dimer, enables phosphorylation of Thr-402 and allows the kinase domain to adopt an active structure. Following caspase cleavage, autophosphorylated PAK-2p34 is constitutively active. Its function is as follows. Serine/threonine protein kinase that plays a role in a variety of different signaling pathways including cytoskeleton regulation, cell motility, cell cycle progression, apoptosis or proliferation. Acts as a downstream effector of the small GTPases CDC42 and RAC1. Activation by the binding of active CDC42 and RAC1 results in a conformational change and a subsequent autophosphorylation on several serine and/or threonine residues. Full-length PAK2 stimulates cell survival and cell growth. Phosphorylates MAPK4 and MAPK6 and activates the downstream target MAPKAPK5, a regulator of F-actin polymerization and cell migration. Phosphorylates JUN and plays an important role in EGF-induced cell proliferation. Phosphorylates many other substrates including histone H4 to promote assembly of H3.3 and H4 into nucleosomes, BAD, ribosomal protein S6, or MBP. Phosphorylates CASP7, thereby preventing its activity. Additionally, associates with ARHGEF7 and GIT1 to perform kinase-independent functions such as spindle orientation control during mitosis. On the other hand, apoptotic stimuli such as DNA damage lead to caspase-mediated cleavage of PAK2, generating PAK-2p34, an active p34 fragment that translocates to the nucleus and promotes cellular apoptosis involving the JNK signaling pathway. Caspase-activated PAK2 phosphorylates MKNK1 and reduces cellular translation. In Oryctolagus cuniculus (Rabbit), this protein is Serine/threonine-protein kinase PAK 2 (PAK2).